The sequence spans 475 residues: Ribulose bisphosphate carboxylase large chain (475 aa).

A propeptide spanning residues 1–2 (MS) is cleaved from the precursor. N-acetylproline is present on Pro-3. Lys-14 carries the N6,N6,N6-trimethyllysine modification. Substrate-binding residues include Asn-123 and Thr-173. Lys-175 functions as the Proton acceptor in the catalytic mechanism. Lys-177 contributes to the substrate binding site. The Mg(2+) site is built by Lys-201, Asp-203, and Glu-204. Lys-201 carries the post-translational modification N6-carboxylysine. The active-site Proton acceptor is the His-294. Residues Arg-295, His-327, and Ser-379 each coordinate substrate.

It belongs to the RuBisCO large chain family. Type I subfamily. As to quaternary structure, heterohexadecamer of 8 large chains and 8 small chains; disulfide-linked. The disulfide link is formed within the large subunit homodimers. It depends on Mg(2+) as a cofactor. The disulfide bond which can form in the large chain dimeric partners within the hexadecamer appears to be associated with oxidative stress and protein turnover.

The protein localises to the plastid. The protein resides in the chloroplast. It catalyses the reaction 2 (2R)-3-phosphoglycerate + 2 H(+) = D-ribulose 1,5-bisphosphate + CO2 + H2O. The catalysed reaction is D-ribulose 1,5-bisphosphate + O2 = 2-phosphoglycolate + (2R)-3-phosphoglycerate + 2 H(+). Functionally, ruBisCO catalyzes two reactions: the carboxylation of D-ribulose 1,5-bisphosphate, the primary event in carbon dioxide fixation, as well as the oxidative fragmentation of the pentose substrate in the photorespiration process. Both reactions occur simultaneously and in competition at the same active site. The sequence is that of Ribulose bisphosphate carboxylase large chain from Notothixos subaureus (Golden mistletoe).